The sequence spans 284 residues: NAD/NADP-dependent indole-3-acetaldehyde reductase (284 aa).

Asp49 serves as a coordination point for NADPH. Catalysis depends on proton donor residues Tyr54 and His109. Positions 143, 165, 196, 201, 239, 240, 241, 242, 243, and 246 each coordinate NADPH.

Belongs to the aldo/keto reductase family. In terms of assembly, monomer.

The protein resides in the cytoplasm. The protein localises to the nucleus. The catalysed reaction is indole-3-ethanol + NAD(+) = indole-3-acetaldehyde + NADH + H(+). It carries out the reaction indole-3-ethanol + NADP(+) = indole-3-acetaldehyde + NADPH + H(+). This Schizosaccharomyces pombe (strain 972 / ATCC 24843) (Fission yeast) protein is NAD/NADP-dependent indole-3-acetaldehyde reductase.